Reading from the N-terminus, the 205-residue chain is Putative 3-methyladenine DNA glycosylase (205 aa).

This sequence belongs to the DNA glycosylase MPG family.

The polypeptide is Putative 3-methyladenine DNA glycosylase (Bacillus anthracis (strain A0248)).